The primary structure comprises 243 residues: Endochitinase (243 aa).

3 disulfides stabilise this stretch: Cys-23–Cys-85, Cys-97–Cys-105, and Cys-223–Cys-236. The active-site Proton donor is Glu-67.

It localises to the vacuole. The catalysed reaction is Random endo-hydrolysis of N-acetyl-beta-D-glucosaminide (1-&gt;4)-beta-linkages in chitin and chitodextrins.. Defense against chitin-containing fungal pathogens. Shows activity on chitin, tetra-N-acetylglucosamine and chitosan. The protein is Endochitinase of Carica papaya (Papaya).